A 433-amino-acid chain; its full sequence is Pectinesterase B (433 aa).

Residues 1-21 (MSLTHYSGLAAAVSMSLILTA) form the signal peptide. Cys22 is lipidated: N-palmitoyl cysteine. The S-diacylglycerol cysteine moiety is linked to residue Cys22. Topologically, residues 22 to 433 (CGGQTPNSAR…EYNTQVLLHE (412 aa)) are periplasmic. 2 residues coordinate substrate: Thr202 and Gln236. Asp259 serves as the catalytic Proton donor. Asp292 acts as the Nucleophile in catalysis. Residues Arg356 and Trp358 each coordinate substrate.

This sequence belongs to the pectinesterase family.

It is found in the cell outer membrane. The enzyme catalyses [(1-&gt;4)-alpha-D-galacturonosyl methyl ester](n) + n H2O = [(1-&gt;4)-alpha-D-galacturonosyl](n) + n methanol + n H(+). It participates in glycan metabolism; pectin degradation; 2-dehydro-3-deoxy-D-gluconate from pectin: step 1/5. Its function is as follows. Probably involved in the degradation of methylated oligogalacturonides present in the periplasm. More active on methylated oligogalacturides than on pectin. This is Pectinesterase B from Dickeya dadantii (strain 3937) (Erwinia chrysanthemi (strain 3937)).